The primary structure comprises 680 residues: MNLCSSGATASTTSLSSTGQAERSGGVPGGGAEGGGGGGGSGNSGGGGKTSDVSAEASTLCFAGGSGTAGAITGTEELSNANSPANGAGGASGSTGSGQQPTGSNGHSHLHNENNANMPPETRPKMVTVKHPESNKPKPTTKKSKPIQADQDVIKALQRCRIKRLDLSKSSITVIPSTVKECVHLTELYLYSNKIGQLPPEIGCLVSLRNLALNENSLTSLPESLQNCSQLKVLDLRHNKLAEIPPVIYRLRSLTTLYLRFNRITAVADDLRQLVNLTMLSLRENKIRELGSAIGALVNLTTLDVSHNHLEHLPEDIGNCVNLSALDLQHNELLDIPDSIGNLKSLVRLGMRYNRLSSVPATLKNCKSMDEFNVEGNGITQLPDGMLASLSGLTTITLSRNQFASYPTGGPAQFTNVYSINLEHNRIDKIPYGIFSRAKGLTKLNMKENMLTALPLDIGTWVNMVELNLATNALQKLPDDIMNLQNLEILILSNNMLKKIPNTIGNLRRLRILDLEENRIEVLPHEIGLLHELQRLILQTNQITMLPRSIGHLGNLTHLSVSENNLQFLPEEIGSLESLENLYINQNPGLEKLPFELALCQNLKYLNIDKCPLSTIPPEIQAGGPSLVLQWLKMHSPYRQIDCYYQYELQTVNQAPGAGGNGGGGAAAAGGSASRSSDRR.

A compositionally biased stretch (low complexity) spans 1-19; the sequence is MNLCSSGATASTTSLSSTG. Disordered stretches follow at residues 1-54 and 73-149; these read MNLC…SDVS and TGTE…PIQA. A compositionally biased stretch (gly residues) spans 26–49; it reads GVPGGGAEGGGGGGGSGNSGGGGK. Over residues 73-86 the composition is skewed to low complexity; the sequence is TGTEELSNANSPAN. Positions 87 to 96 are enriched in gly residues; that stretch reads GAGGASGSTG. The segment covering 97–106 has biased composition (low complexity); sequence SGQQPTGSNG. 20 LRR repeats span residues 161-182, 184-205, 207-228, 230-251, 253-274, 276-297, 299-320, 322-343, 345-367, 368-389, 392-413, 416-437, 440-461, 463-484, 486-507, 509-530, 532-553, 555-576, 578-600, and 602-623; these read RIKRLDLSKSSITVIPSTVKEC, HLTELYLYSNKIGQLPPEIGCL, SLRNLALNENSLTSLPESLQNC, QLKVLDLRHNKLAEIPPVIYRL, SLTTLYLRFNRITAVADDLRQL, NLTMLSLRENKIRELGSAIGAL, NLTTLDVSHNHLEHLPEDIGNC, NLSALDLQHNELLDIPDSIGNL, SLVRLGMRYNRLSSVPATLKNCK, SMDEFNVEGNGITQLPDGMLAS, GLTTITLSRNQFASYPTGGPAQ, NVYSINLEHNRIDKIPYGIFSR, GLTKLNMKENMLTALPLDIGTW, NMVELNLATNALQKLPDDIMNL, NLEILILSNNMLKKIPNTIGNL, RLRILDLEENRIEVLPHEIGLL, ELQRLILQTNQITMLPRSIGHL, NLTHLSVSENNLQFLPEEIGSL, SLENLYINQNPGLEKLPFELALC, and NLKYLNIDKCPLSTIPPEIQAG. Over residues 658–668 the composition is skewed to gly residues; it reads AGGNGGGGAAA. The tract at residues 658-680 is disordered; it reads AGGNGGGGAAAAGGSASRSSDRR. The span at 669–680 shows a compositional bias: low complexity; that stretch reads AGGSASRSSDRR.

It belongs to the SHOC2 family.

In terms of biological role, acts as a Ras effector and participates in MAPK pathway activation. Probably acts as a regulatory subunit of protein phosphatase that specifically dephosphorylates Raf kinase and stimulate Raf activity at specialized signaling complexes upon Ras activation. This is Leucine-rich repeat protein soc-2 homolog (Sur-8) from Drosophila simulans (Fruit fly).